The following is a 179-amino-acid chain: UPF0302 protein EF_1554 (179 aa).

It belongs to the UPF0302 family.

The protein is UPF0302 protein EF_1554 of Enterococcus faecalis (strain ATCC 700802 / V583).